A 351-amino-acid chain; its full sequence is MTIDAALAEQIRRTPKAELHVHIEGTLEPELIFRLAQRNQVALPYPSVEALRAAYAFTDLQSFLDIYYAGASVLLTEEDFFDMTMDYVKRAVADNVRHAEIFFDPQTHTARGVPIGVVIDGIADALAQARTEYDFSSSLILCFLRHLPEEDAFATLEAALPYRDRFVGVGLDSSERGNPPEKFARVFARARELGLHLVAHAGEEGPAQYVTDALDILKAQRIDHGVRAIDDPALVERLARERVALTVCPLSNVKLKVYPDLRDHPLKRMLDAGVVITLHSDDPAYFGGYMNANWEATFEALPLDAADAHKLARNSFEAAFLPAMQKAEFLAEVDHFWSSPPKSPPATAPAA.

Zn(2+)-binding residues include His-20, His-22, and His-200. Glu-203 acts as the Proton donor in catalysis. Residue Asp-281 participates in Zn(2+) binding. Residue Asp-282 participates in substrate binding.

This sequence belongs to the metallo-dependent hydrolases superfamily. Adenosine and AMP deaminases family. Adenine deaminase type 2 subfamily. Requires Zn(2+) as cofactor.

The enzyme catalyses adenine + H2O + H(+) = hypoxanthine + NH4(+). In terms of biological role, catalyzes the hydrolytic deamination of adenine to hypoxanthine. Plays an important role in the purine salvage pathway and in nitrogen catabolism. In Cupriavidus necator (strain ATCC 17699 / DSM 428 / KCTC 22496 / NCIMB 10442 / H16 / Stanier 337) (Ralstonia eutropha), this protein is Adenine deaminase.